The following is a 242-amino-acid chain: ATP synthase subunit a (242 aa).

The next 6 helical transmembrane spans lie at 29 to 49 (SAVA…TAFV), 84 to 104 (FFPL…LGMV), 114 to 134 (IIVT…YGIY), 140 to 160 (FFSL…MVII), 181 to 201 (VAGH…TWLF), and 206 to 226 (IALV…QAYI).

This sequence belongs to the ATPase A chain family. As to quaternary structure, F-type ATPases have 2 components, CF(1) - the catalytic core - and CF(0) - the membrane proton channel. CF(1) has five subunits: alpha(3), beta(3), gamma(1), delta(1), epsilon(1). CF(0) has three main subunits: a(1), b(2) and c(9-12). The alpha and beta chains form an alternating ring which encloses part of the gamma chain. CF(1) is attached to CF(0) by a central stalk formed by the gamma and epsilon chains, while a peripheral stalk is formed by the delta and b chains.

It is found in the cell inner membrane. In terms of biological role, key component of the proton channel; it plays a direct role in the translocation of protons across the membrane. This chain is ATP synthase subunit a, found in Orientia tsutsugamushi (strain Ikeda) (Rickettsia tsutsugamushi).